A 293-amino-acid polypeptide reads, in one-letter code: Ribosomal protein L11 methyltransferase (293 aa).

S-adenosyl-L-methionine contacts are provided by threonine 145, glycine 166, aspartate 188, and asparagine 230.

It belongs to the methyltransferase superfamily. PrmA family.

Its subcellular location is the cytoplasm. The catalysed reaction is L-lysyl-[protein] + 3 S-adenosyl-L-methionine = N(6),N(6),N(6)-trimethyl-L-lysyl-[protein] + 3 S-adenosyl-L-homocysteine + 3 H(+). Its function is as follows. Methylates ribosomal protein L11. The chain is Ribosomal protein L11 methyltransferase from Shewanella baltica (strain OS185).